Here is a 172-residue protein sequence, read N- to C-terminus: Protein-export protein SecB (172 aa).

This sequence belongs to the SecB family. Homotetramer, a dimer of dimers. One homotetramer interacts with 1 SecA dimer.

Its subcellular location is the cytoplasm. In terms of biological role, one of the proteins required for the normal export of preproteins out of the cell cytoplasm. It is a molecular chaperone that binds to a subset of precursor proteins, maintaining them in a translocation-competent state. It also specifically binds to its receptor SecA. The polypeptide is Protein-export protein SecB (Xylella fastidiosa (strain Temecula1 / ATCC 700964)).